A 276-amino-acid chain; its full sequence is 2-dehydro-3-deoxyphosphooctonate aldolase (276 aa).

The protein belongs to the KdsA family.

The protein localises to the cytoplasm. The enzyme catalyses D-arabinose 5-phosphate + phosphoenolpyruvate + H2O = 3-deoxy-alpha-D-manno-2-octulosonate-8-phosphate + phosphate. Its pathway is carbohydrate biosynthesis; 3-deoxy-D-manno-octulosonate biosynthesis; 3-deoxy-D-manno-octulosonate from D-ribulose 5-phosphate: step 2/3. The protein operates within bacterial outer membrane biogenesis; lipopolysaccharide biosynthesis. The polypeptide is 2-dehydro-3-deoxyphosphooctonate aldolase (Xanthomonas axonopodis pv. citri (strain 306)).